We begin with the raw amino-acid sequence, 94 residues long: Small ribosomal subunit protein bS20 (94 aa).

This sequence belongs to the bacterial ribosomal protein bS20 family.

Functionally, binds directly to 16S ribosomal RNA. In Aquifex aeolicus (strain VF5), this protein is Small ribosomal subunit protein bS20.